The sequence spans 241 residues: Probable transcriptional regulatory protein RSc2190 (241 aa).

This sequence belongs to the TACO1 family.

Its subcellular location is the cytoplasm. In Ralstonia nicotianae (strain ATCC BAA-1114 / GMI1000) (Ralstonia solanacearum), this protein is Probable transcriptional regulatory protein RSc2190.